Reading from the N-terminus, the 315-residue chain is MRQNNNITEFVLLGFSQYPDVQNALFVMFLLIYIVTMVGNLLIVVSIIASPFLGSPVYFFLACLSFIDAVYSTTISPVLIVDLLCDKKTISFPACMGQLFIEHLFGDTDVFLLVVMAYDRYVATCKPLRYLTIMNRQVCILLLVVAVTGGFLHSVFQILVVYSLPFCGPNVIYHFFCNIYPLLDLECTDTYFVGLAVVFNGGAICMVIFTLLLISYGVILNSLKTYSPEGRHKAPFICSSHFIMVILFFVPCIFLYVRPVSNFPIDKFLTVFYSVITPKLNPFIYMLRNSEMRNAIENLLGYQSGKTGFRCSKLN.

The Extracellular segment spans residues 1–24 (MRQNNNITEFVLLGFSQYPDVQNA). N-linked (GlcNAc...) asparagine glycosylation occurs at Asn6. A helical transmembrane segment spans residues 25-45 (LFVMFLLIYIVTMVGNLLIVV). Residues 46–57 (SIIASPFLGSPV) are Cytoplasmic-facing. The helical transmembrane segment at 58-80 (YFFLACLSFIDAVYSTTISPVLI) threads the bilayer. At 81–95 (VDLLCDKKTISFPAC) the chain is on the extracellular side. A disulfide bond links Cys95 and Cys177. A helical transmembrane segment spans residues 96-116 (MGQLFIEHLFGDTDVFLLVVM). Residues 117–139 (AYDRYVATCKPLRYLTIMNRQVC) are Cytoplasmic-facing. A helical transmembrane segment spans residues 140-160 (ILLLVVAVTGGFLHSVFQILV). At 161 to 193 (VYSLPFCGPNVIYHFFCNIYPLLDLECTDTYFV) the chain is on the extracellular side. Residues 194 to 214 (GLAVVFNGGAICMVIFTLLLI) traverse the membrane as a helical segment. The Cytoplasmic segment spans residues 215–235 (SYGVILNSLKTYSPEGRHKAP). Residues 236-256 (FICSSHFIMVILFFVPCIFLY) traverse the membrane as a helical segment. Over 257–266 (VRPVSNFPID) the chain is Extracellular. A helical transmembrane segment spans residues 267–287 (KFLTVFYSVITPKLNPFIYML). At 288-315 (RNSEMRNAIENLLGYQSGKTGFRCSKLN) the chain is on the cytoplasmic side.

The protein belongs to the G-protein coupled receptor 1 family.

It is found in the cell membrane. Functionally, odorant receptor. The protein is Olfactory receptor 4A8 (OR4A8) of Homo sapiens (Human).